The sequence spans 157 residues: Mediator of RNA polymerase II transcription subunit 22 (157 aa).

This sequence belongs to the Mediator complex subunit 22 family. As to quaternary structure, component of the Mediator complex.

Its subcellular location is the nucleus. Its function is as follows. Component of the Mediator complex, a coactivator involved in the regulated transcription of nearly all RNA polymerase II-dependent genes. Mediator functions as a bridge to convey information from gene-specific regulatory proteins to the basal RNA polymerase II transcription machinery. Mediator is recruited to promoters by direct interactions with regulatory proteins and serves as a scaffold for the assembly of a functional preinitiation complex with RNA polymerase II and the general transcription factors. This is Mediator of RNA polymerase II transcription subunit 22 (mdt-22) from Caenorhabditis elegans.